The following is a 173-amino-acid chain: Acetyl-CoA decarbonylase/synthase complex subunit epsilon (173 aa).

This sequence belongs to the CdhB family. Heterotetramer of two alpha and two epsilon subunits. The ACDS complex is made up of alpha, epsilon, beta, gamma and delta subunits with a probable stoichiometry of (alpha(2)epsilon(2))(4)-beta(8)-(gamma(1)delta(1))(8).

Its pathway is one-carbon metabolism; methanogenesis from acetate. Part of a complex that catalyzes the reversible cleavage of acetyl-CoA, allowing growth on acetate as sole source of carbon and energy. The alpha-epsilon subcomponent functions as a carbon monoxide dehydrogenase. The precise role of the epsilon subunit is unclear; it may have a stabilizing role within the alpha(2)epsilon(2) component and/or be involved in electron transfer to FAD during a potential FAD-mediated CO oxidation. In Methanothermobacter thermautotrophicus (strain ATCC 29096 / DSM 1053 / JCM 10044 / NBRC 100330 / Delta H) (Methanobacterium thermoautotrophicum), this protein is Acetyl-CoA decarbonylase/synthase complex subunit epsilon.